The chain runs to 167 residues: U-scoloptoxin-Er5c (167 aa).

The first 22 residues, 1–22 (MKTNCEFPLLCLLIVLVANVEG), serve as a signal peptide directing secretion. The propeptide occupies 23 to 94 (EVEDTGLKMV…KRLWRNWERR (72 aa)). RLWRNWE repeat units lie at residues 34–40 (RLWRNWE), 61–67 (RLWRNWE), and 86–92 (RLWRNWE). The residue at position 95 (Gln-95) is a Pyrrolidone carboxylic acid. An RLWRNWE 4; approximate repeat occupies 107-113 (ELWRNWE). Positions 112-118 (WEDLKRR) are excised as a propeptide. The residue at position 119 (Gln-119) is a Pyrrolidone carboxylic acid. The stretch at 134-140 (RLWRNWE) is one RLWRNWE 5 repeat. A propeptide spanning residues 139 to 167 (WEDNHATLRKRSADSLSRQKRLGRERGKE) is cleaved from the precursor. Residues 147-167 (RKRSADSLSRQKRLGRERGKE) are disordered.

It belongs to the scoloptoxin-08 family. Expressed by the venom gland.

It is found in the secreted. In Ethmostigmus rubripes (Giant centipede), this protein is U-scoloptoxin-Er5c.